The primary structure comprises 172 residues: Translation initiation factor IF-3 (172 aa).

This sequence belongs to the IF-3 family. As to quaternary structure, monomer.

The protein resides in the cytoplasm. Functionally, IF-3 binds to the 30S ribosomal subunit and shifts the equilibrium between 70S ribosomes and their 50S and 30S subunits in favor of the free subunits, thus enhancing the availability of 30S subunits on which protein synthesis initiation begins. This Lactobacillus johnsonii (strain CNCM I-12250 / La1 / NCC 533) protein is Translation initiation factor IF-3.